Reading from the N-terminus, the 490-residue chain is MARFDLQKLYIDGGYSDAGSDATFEAINPANGEVLAQVQRATKEDVERAVVSAEKGQKIWAAMTAMERSRILRRAVDILRERNDELAALETLDTGKAFSETQYVDVVTGADVLEYYAGLVPAIEGEQIPLRDTSFVYTRREPLGVVAGIGAWNYPIQIALWKSAPALAAGNAMIFKPSEVTSLTTLKLAEIYTEAGVPAGVFNVLTGSGREVGTWLTEHPRIEKVSFTGGTDTGKKVMASASSSSLKEVTMELGGKSPLIVFEDADLDRAADIAMMANFYSSGQVCTNGTRVFVPKHLQAAFEAKIVERVARIRVGDPQDENTNFGPLVSFAHMESVLGYIAKGKEQGARLLCGGDRLTDGDFAKGAYVAPTVFTDCTDEMTIVREEIFGPVMSILTYETEEEVIRRANDTDFGLAAGLVTKDLNRAHRVIHQLEAGICWINAWGESDAKMPVGGYKQSGVGRENGISSLNNFTRIKSVQVELGDYASVF.

Positions 27 and 93 each coordinate K(+). 150 to 152 is a binding site for NAD(+); the sequence is GAW. Residue K162 is the Charge relay system of the active site. Position 176–179 (176–179) interacts with NAD(+); it reads KPSE. Residue V180 participates in K(+) binding. An NAD(+)-binding site is contributed by 230–233; the sequence is GTDT. Residue L246 coordinates K(+). The active-site Proton acceptor is E252. Residues G254, C286, and E387 each contribute to the NAD(+) site. The Nucleophile role is filled by C286. Residue C286 is modified to Cysteine sulfenic acid (-SOH). The K(+) site is built by K457 and G460. Residue E464 is the Charge relay system of the active site.

Belongs to the aldehyde dehydrogenase family. As to quaternary structure, dimer of dimers. K(+) serves as cofactor.

It catalyses the reaction betaine aldehyde + NAD(+) + H2O = glycine betaine + NADH + 2 H(+). It functions in the pathway amine and polyamine biosynthesis; betaine biosynthesis via choline pathway; betaine from betaine aldehyde: step 1/1. In terms of biological role, involved in the biosynthesis of the osmoprotectant glycine betaine. Catalyzes the irreversible oxidation of betaine aldehyde to the corresponding acid. This Pseudomonas fluorescens (strain SBW25) protein is Betaine aldehyde dehydrogenase.